We begin with the raw amino-acid sequence, 864 residues long: 3-O-alpha-D-mannopyranosyl-alpha-D-mannopyranose xylosylphosphotransferase (864 aa).

The interval 1-66 (MPSTALSPPS…VPPRSPSRKI (66 aa)) is disordered. Over 1 to 82 (MPSTALSPPS…HIRPHITPRT (82 aa)) the chain is Cytoplasmic. Composition is skewed to low complexity over residues 16 to 29 (SYDS…PSSP) and 42 to 52 (SPSPSRLESLL). A helical transmembrane segment spans residues 83-103 (LTPVFLWTLALWLIHHFLFPL). At 104 to 864 (SSPFAKLAKP…WDPVKDRYND (761 aa)) the chain is on the lumenal side. N-linked (GlcNAc...) asparagine glycans are attached at residues Asn200, Asn301, and Asn583.

The protein belongs to the XPT1 family. The cofactor is Mn(2+).

The protein resides in the golgi apparatus membrane. The catalysed reaction is 3-alpha-D-mannopyranosyl-alpha-D-mannopyranose + UDP-alpha-D-xylose = 3-O-(6-O-alpha-D-xylosylphospho-alpha-D-mannopyranosyl)-alpha-D-mannopyranose + UMP + H(+). In terms of biological role, xylosylphosphotransferase that is specific for UDP-xylose as a donor and mannose as an acceptor to form a xylose-alpha-1-phosphate-6-mannose linkage. Functions in the O-glycosylation of proteins en route through the secretory pathway. This Cryptococcus neoformans var. grubii (Filobasidiella neoformans var. grubii) protein is 3-O-alpha-D-mannopyranosyl-alpha-D-mannopyranose xylosylphosphotransferase (XPT1).